Reading from the N-terminus, the 185-residue chain is MAEAKALPRFKKLYQDNIRKALLEEFKYDNEMQIPRITKVVLNMGVGEATGDSKKPAVAAEDLAMIAGQKAVVTRARNSIATFKLREGMPIGAKVTLRQDRMYEFLDRLITIALPRVRDFRGLNPKSFDGRGNYAMGIKEHIVFPEINYDKVDQIWGMDIIVCTTAKTDDEARSFLRAFNFPFRQ.

This sequence belongs to the universal ribosomal protein uL5 family. Part of the 50S ribosomal subunit; part of the 5S rRNA/L5/L18/L25 subcomplex. Contacts the 5S rRNA and the P site tRNA. Forms a bridge to the 30S subunit in the 70S ribosome.

This is one of the proteins that bind and probably mediate the attachment of the 5S RNA into the large ribosomal subunit, where it forms part of the central protuberance. In the 70S ribosome it contacts protein S13 of the 30S subunit (bridge B1b), connecting the 2 subunits; this bridge is implicated in subunit movement. Contacts the P site tRNA; the 5S rRNA and some of its associated proteins might help stabilize positioning of ribosome-bound tRNAs. This is Large ribosomal subunit protein uL5 from Brucella abortus (strain 2308).